A 201-amino-acid chain; its full sequence is Dephospho-CoA kinase (201 aa).

One can recognise a DPCK domain in the interval 3–201 (ILGLTGGIGS…QIDSRVGCKI (199 aa)). 11 to 16 (GSGKSL) contacts ATP.

It belongs to the CoaE family.

It localises to the cytoplasm. The catalysed reaction is 3'-dephospho-CoA + ATP = ADP + CoA + H(+). The protein operates within cofactor biosynthesis; coenzyme A biosynthesis; CoA from (R)-pantothenate: step 5/5. Catalyzes the phosphorylation of the 3'-hydroxyl group of dephosphocoenzyme A to form coenzyme A. This Ehrlichia ruminantium (strain Welgevonden) protein is Dephospho-CoA kinase.